The chain runs to 323 residues: V-type ATP synthase subunit C (323 aa).

This sequence belongs to the V-ATPase V0D/AC39 subunit family.

Its function is as follows. Produces ATP from ADP in the presence of a proton gradient across the membrane. This Thermus thermophilus (strain ATCC 27634 / DSM 579 / HB8) protein is V-type ATP synthase subunit C (atpC).